We begin with the raw amino-acid sequence, 122 residues long: Large ribosomal subunit protein uL14 (122 aa).

It belongs to the universal ribosomal protein uL14 family. In terms of assembly, part of the 50S ribosomal subunit. Forms a cluster with proteins L3 and L19. In the 70S ribosome, L14 and L19 interact and together make contacts with the 16S rRNA in bridges B5 and B8.

Its function is as follows. Binds to 23S rRNA. Forms part of two intersubunit bridges in the 70S ribosome. The chain is Large ribosomal subunit protein uL14 from Shewanella halifaxensis (strain HAW-EB4).